The primary structure comprises 905 residues: Protein translocase subunit SecA (905 aa).

Residues Gln87, 105-109 (GEGKT), and Asp509 contribute to the ATP site. Zn(2+) contacts are provided by Cys890, Cys892, Cys901, and His902.

Belongs to the SecA family. Monomer and homodimer. Part of the essential Sec protein translocation apparatus which comprises SecA, SecYEG and auxiliary proteins SecDF-YajC and YidC. Zn(2+) serves as cofactor.

It localises to the cell inner membrane. The protein localises to the cytoplasm. It carries out the reaction ATP + H2O + cellular proteinSide 1 = ADP + phosphate + cellular proteinSide 2.. Its function is as follows. Part of the Sec protein translocase complex. Interacts with the SecYEG preprotein conducting channel. Has a central role in coupling the hydrolysis of ATP to the transfer of proteins into and across the cell membrane, serving both as a receptor for the preprotein-SecB complex and as an ATP-driven molecular motor driving the stepwise translocation of polypeptide chains across the membrane. The chain is Protein translocase subunit SecA from Acinetobacter baylyi (strain ATCC 33305 / BD413 / ADP1).